Here is a 147-residue protein sequence, read N- to C-terminus: Protein-export protein SecB (147 aa).

It belongs to the SecB family. In terms of assembly, homotetramer, a dimer of dimers. One homotetramer interacts with 1 SecA dimer.

The protein resides in the cytoplasm. Its function is as follows. One of the proteins required for the normal export of preproteins out of the cell cytoplasm. It is a molecular chaperone that binds to a subset of precursor proteins, maintaining them in a translocation-competent state. It also specifically binds to its receptor SecA. The protein is Protein-export protein SecB of Neisseria gonorrhoeae (strain ATCC 700825 / FA 1090).